Here is a 553-residue protein sequence, read N- to C-terminus: Methionine--tRNA ligase (553 aa).

The 'HIGH' region signature appears at 12-22; that stretch reads PYANSQLHLGH. Cys-144, Cys-147, Cys-157, and Cys-160 together coordinate Zn(2+). Residues 332-336 carry the 'KMSKS' region motif; the sequence is KFSKS. Residue Lys-335 participates in ATP binding.

It belongs to the class-I aminoacyl-tRNA synthetase family. MetG type 1 subfamily. Monomer. Zn(2+) serves as cofactor.

The protein resides in the cytoplasm. The enzyme catalyses tRNA(Met) + L-methionine + ATP = L-methionyl-tRNA(Met) + AMP + diphosphate. Its function is as follows. Is required not only for elongation of protein synthesis but also for the initiation of all mRNA translation through initiator tRNA(fMet) aminoacylation. In Dehalococcoides mccartyi (strain ATCC BAA-2100 / JCM 16839 / KCTC 5957 / BAV1), this protein is Methionine--tRNA ligase.